Here is a 201-residue protein sequence, read N- to C-terminus: MRVRRDKNLEKILDVDPLVISKFPFKLKQDTIIELGSGKGTMISALALKNPSQNYLCVERDRTIASKAIEKFNDLNLKNINLIVSDIQHLTEIIENKVNTIWLTFSDPWPKNRHEHRRLTYKTFLDLYKKFLSPQGVIKLKTDNDKFFHYSLESMSEFGMKILYQTNDLHNSIKNLDNEMTDYEKKWSSLGKSINYLEASF.

E34, E59, D86, and D107 together coordinate S-adenosyl-L-methionine. Residue D107 is part of the active site. Substrate-binding positions include K111, D143, and 181–184 (TDYE).

It belongs to the class I-like SAM-binding methyltransferase superfamily. TrmB family.

It carries out the reaction guanosine(46) in tRNA + S-adenosyl-L-methionine = N(7)-methylguanosine(46) in tRNA + S-adenosyl-L-homocysteine. It functions in the pathway tRNA modification; N(7)-methylguanine-tRNA biosynthesis. Functionally, catalyzes the formation of N(7)-methylguanine at position 46 (m7G46) in tRNA. This chain is tRNA (guanine-N(7)-)-methyltransferase, found in Mycoplasma mobile (strain ATCC 43663 / 163K / NCTC 11711) (Mesomycoplasma mobile).